Consider the following 115-residue polypeptide: Probable non-functional immunoglobulin heavy variable 8-51-1 (115 aa).

The N-terminal stretch at 1-17 (MLVCVLLYSFRLFGIQG) is a signal peptide. The framework-1 stretch occupies residues 18 to 42 (EAQLTESGGDLVHLEGPLRLSCAAS). The 97-residue stretch at 19–115 (AQLTESGGDL…QNMAAFNCAG (97 aa)) folds into the Ig-like domain. The segment at 43–50 (WFTFSIYE) is complementarity-determining-1. The tract at residues 51 to 67 (IHWVCQASGKGLEWVAV) is framework-2. An intrachain disulfide couples cysteine 55 to cysteine 113. A complementarity-determining-2 region spans residues 68-75 (IWRGESHQ). The tract at residues 76–113 (YNADYVRGRLTTSRDNTKYMLYMQMISLRTQNMAAFNC) is framework-3. Residues 114-115 (AG) form a complementarity-determining-3 region.

Immunoglobulins are composed of two identical heavy chains and two identical light chains; disulfide-linked.

The protein resides in the secreted. It is found in the cell membrane. Functionally, probable non-functional open reading frame (ORF) of V region of the variable domain of immunoglobulin heavy chains. Non-functional ORF generally cannot participate in the synthesis of a productive immunoglobulin chain due to altered V-(D)-J or switch recombination and/or splicing site (at mRNA level) and/or conserved amino acid change (protein level). Immunoglobulins, also known as antibodies, are membrane-bound or secreted glycoproteins produced by B lymphocytes. In the recognition phase of humoral immunity, the membrane-bound immunoglobulins serve as receptors which, upon binding of a specific antigen, trigger the clonal expansion and differentiation of B lymphocytes into immunoglobulins-secreting plasma cells. Secreted immunoglobulins mediate the effector phase of humoral immunity, which results in the elimination of bound antigens. The antigen binding site is formed by the variable domain of one heavy chain, together with that of its associated light chain. Thus, each immunoglobulin has two antigen binding sites with remarkable affinity for a particular antigen. The variable domains are assembled by a process called V-(D)-J rearrangement and can then be subjected to somatic hypermutations which, after exposure to antigen and selection, allow affinity maturation for a particular antigen. This Homo sapiens (Human) protein is Probable non-functional immunoglobulin heavy variable 8-51-1.